Here is a 456-residue protein sequence, read N- to C-terminus: Bifunctional protein GlmU (456 aa).

Positions 1–229 (MYKSAVILAA…PDEIKGVNSR (229 aa)) are pyrophosphorylase. UDP-N-acetyl-alpha-D-glucosamine-binding positions include 8-11 (LAAG), K22, Q73, and 78-79 (GT). A Mg(2+)-binding site is contributed by D103. Positions 140, 155, 170, and 227 each coordinate UDP-N-acetyl-alpha-D-glucosamine. Residue N227 coordinates Mg(2+). Residues 230–250 (GQLAEAEEILRLRINERHMEN) form a linker region. An N-acetyltransferase region spans residues 251–456 (GVTLIDPKNT…GWVAKKGLKK (206 aa)). UDP-N-acetyl-alpha-D-glucosamine is bound by residues R332 and K350. H362 serves as the catalytic Proton acceptor. Residues Y365 and N376 each contribute to the UDP-N-acetyl-alpha-D-glucosamine site. Acetyl-CoA-binding positions include 385–386 (NY), A422, and R439.

This sequence in the N-terminal section; belongs to the N-acetylglucosamine-1-phosphate uridyltransferase family. It in the C-terminal section; belongs to the transferase hexapeptide repeat family. Homotrimer. Mg(2+) is required as a cofactor.

Its subcellular location is the cytoplasm. The catalysed reaction is alpha-D-glucosamine 1-phosphate + acetyl-CoA = N-acetyl-alpha-D-glucosamine 1-phosphate + CoA + H(+). It carries out the reaction N-acetyl-alpha-D-glucosamine 1-phosphate + UTP + H(+) = UDP-N-acetyl-alpha-D-glucosamine + diphosphate. It participates in nucleotide-sugar biosynthesis; UDP-N-acetyl-alpha-D-glucosamine biosynthesis; N-acetyl-alpha-D-glucosamine 1-phosphate from alpha-D-glucosamine 6-phosphate (route II): step 2/2. It functions in the pathway nucleotide-sugar biosynthesis; UDP-N-acetyl-alpha-D-glucosamine biosynthesis; UDP-N-acetyl-alpha-D-glucosamine from N-acetyl-alpha-D-glucosamine 1-phosphate: step 1/1. The protein operates within bacterial outer membrane biogenesis; LPS lipid A biosynthesis. Catalyzes the last two sequential reactions in the de novo biosynthetic pathway for UDP-N-acetylglucosamine (UDP-GlcNAc). The C-terminal domain catalyzes the transfer of acetyl group from acetyl coenzyme A to glucosamine-1-phosphate (GlcN-1-P) to produce N-acetylglucosamine-1-phosphate (GlcNAc-1-P), which is converted into UDP-GlcNAc by the transfer of uridine 5-monophosphate (from uridine 5-triphosphate), a reaction catalyzed by the N-terminal domain. This Clostridium novyi (strain NT) protein is Bifunctional protein GlmU.